A 251-amino-acid polypeptide reads, in one-letter code: Chlorocatechol 1,2-dioxygenase (251 aa).

Tyr-130, Tyr-164, His-188, and His-190 together coordinate Fe cation.

This sequence belongs to the intradiol ring-cleavage dioxygenase family. The cofactor is Fe(3+).

The catalysed reaction is 3-chlorocatechol + O2 = (2E,4Z)-2-chloromuconate + 2 H(+). It carries out the reaction 3,4-dichlorocatechol + O2 = (2Z,4Z)-2,3-dichloromuconate + 2 H(+). It catalyses the reaction 3,5-dichlorocatechol + O2 = (2E,4E)-2,4-dichloromuconate + 2 H(+). The enzyme catalyses 3,6-dichlorocatechol + O2 = (2E,4E)-2,5-dichloromuconate + H(+). The catalysed reaction is 3,4,6-trichlorocatechol + O2 = (2Z,4E)-2,3,5-trichloromuconate + H(+). The protein operates within xenobiotic degradation. In terms of biological role, chlorocatechol 1,2-dioxygenase involved in the degradation of chlorinated benzenes, that occurs via chlorocatechol intermediates. Displays broad substrate specificity. Preferentially cleaves 3-chlorocatechol and 3,4-dichlorocatechol, and shows lower activity on 3,5-dichlorocatechol, 3,6-dichlorocatechol and 3,4,6-trichlorocatechol in vitro. Is not able to convert 3,4,5-trichlorocatechol and 3,4,5,6-tetrachlorocatechol. Thus, probably functions in the degradation pathways of 1,2-dichlorobenzene, 1,4-dichlorobenzene and 1,2,4-trichlorobenzene (via 3,4-dichlorocatechol, 3,6-dichlorocatechol and 3,4,6-trichlorocatechol intermediates, respectively), which allow Pseudomonas sp. strain P51 to grow on these substrates as the sole carbon and energy source. The sequence is that of Chlorocatechol 1,2-dioxygenase from Pseudomonas sp. (strain P51).